A 139-amino-acid polypeptide reads, in one-letter code: Small ribosomal subunit protein uS12 (139 aa).

Residues 118–139 are disordered; the sequence is AGVANRNQSRSRYGTKKPKPKS. The span at 130–139 shows a compositional bias: basic residues; it reads YGTKKPKPKS.

It belongs to the universal ribosomal protein uS12 family. As to quaternary structure, part of the 30S ribosomal subunit. Contacts proteins S8 and S17. May interact with IF1 in the 30S initiation complex.

Functionally, with S4 and S5 plays an important role in translational accuracy. Interacts with and stabilizes bases of the 16S rRNA that are involved in tRNA selection in the A site and with the mRNA backbone. Located at the interface of the 30S and 50S subunits, it traverses the body of the 30S subunit contacting proteins on the other side and probably holding the rRNA structure together. The combined cluster of proteins S8, S12 and S17 appears to hold together the shoulder and platform of the 30S subunit. This chain is Small ribosomal subunit protein uS12, found in Mycoplasma mobile (strain ATCC 43663 / 163K / NCTC 11711) (Mesomycoplasma mobile).